We begin with the raw amino-acid sequence, 432 residues long: Adenylosuccinate synthetase (432 aa).

Residues 13–19 and 41–43 contribute to the GTP site; these read GDEGKGK and GHT. Aspartate 14 functions as the Proton acceptor in the catalytic mechanism. Positions 14 and 41 each coordinate Mg(2+). Residues 14-17, 39-42, threonine 131, arginine 145, glutamine 226, threonine 241, and arginine 305 contribute to the IMP site; these read DEGK and NAGH. The active-site Proton donor is histidine 42. Substrate is bound at residue 301 to 307; sequence SVTGRAR. Residues arginine 307, 333–335, and 416–418 contribute to the GTP site; these read KLD and STG.

Belongs to the adenylosuccinate synthetase family. In terms of assembly, homodimer. It depends on Mg(2+) as a cofactor.

Its subcellular location is the cytoplasm. The enzyme catalyses IMP + L-aspartate + GTP = N(6)-(1,2-dicarboxyethyl)-AMP + GDP + phosphate + 2 H(+). Its pathway is purine metabolism; AMP biosynthesis via de novo pathway; AMP from IMP: step 1/2. In terms of biological role, plays an important role in the de novo pathway of purine nucleotide biosynthesis. Catalyzes the first committed step in the biosynthesis of AMP from IMP. The chain is Adenylosuccinate synthetase from Neisseria meningitidis serogroup C (strain 053442).